Consider the following 152-residue polypeptide: Orientotoxin-1 (152 aa).

In terms of tissue distribution, expressed by the venom gland.

It localises to the secreted. The enzyme catalyses a 1-acyl-sn-glycero-3-phosphocholine + H2O = sn-glycerol 3-phosphocholine + a fatty acid + H(+). In terms of biological role, neurotoxin of presynaptic effect which degrades lysophospholipids. In Vespa orientalis (Oriental hornet), this protein is Orientotoxin-1.